The chain runs to 273 residues: Orotidine 5'-phosphate decarboxylase (273 aa).

The active-site Proton donor is the Lys-96.

This sequence belongs to the OMP decarboxylase family. Type 2 subfamily.

The enzyme catalyses orotidine 5'-phosphate + H(+) = UMP + CO2. It participates in pyrimidine metabolism; UMP biosynthesis via de novo pathway; UMP from orotate: step 2/2. This chain is Orotidine 5'-phosphate decarboxylase, found in Nocardioides sp. (strain ATCC BAA-499 / JS614).